The chain runs to 2581 residues: Chromodomain-helicase-DNA-binding protein 8 (2581 aa).

3 disordered regions span residues 22–114 (DDSF…QTST), 253–281 (VKGS…TPAQ), and 349–375 (QKIQ…PLTL). 2 stretches are compositionally biased toward polar residues: residues 42 to 64 (SLDS…SSAS) and 94 to 114 (DYTT…QTST). Residues 255-267 (GSAPAGNPGATGP) show a composition bias toward low complexity. A compositionally biased stretch (pro residues) spans 355 to 370 (PQPPSSQPQPQPPPSA). Ser-432 carries the phosphoserine modification. Disordered stretches follow at residues 473 to 584 (RARG…KRKK) and 596 to 616 (DEEE…ILPE). Residues 493–516 (RPEEEGEKKRRKKSSGERLKEEKP) show a composition bias toward basic and acidic residues. A phosphoserine mark is found at Ser-553 and Ser-562. Basic residues predominate over residues 572-584 (QKRRSNRQVKRKK). A Glycyl lysine isopeptide (Lys-Gly) (interchain with G-Cter in SUMO) cross-link involves residue Lys-609. Chromo domains are found at residues 642–709 (AIVD…AQMR) and 724–790 (VEVD…RVNR). A Helicase ATP-binding domain is found at 823–997 (LFNWYNRQNC…FSLLHFLEPS (175 aa)). 836-843 (DEMGLGKT) serves as a coordination point for ATP. The DEAH box signature appears at 948–951 (DEAH). The 152-residue stretch at 1137 to 1288 (LIDKLLPKLK…KAVLQSMSGR (152 aa)) folds into the Helicase C-terminal domain. Residues Ser-1420 and Ser-1424 each carry the phosphoserine modification. A disordered region spans residues 1692-1713 (EDPEYKPLQGPPKDPDDEGDPL). Positions 1789–2302 (IARREKQQRW…LVELEVECME (514 aa)) are interaction with FAM124B. Residues Ser-1976 and Ser-1978 each carry the phosphoserine modification. The interval 1988–2016 (QCTSRTASPSPLRPDVPAEKSPEENAVQV) is disordered. The residue at position 1993 (Thr-1993) is a Phosphothreonine. A phosphoserine mark is found at Ser-1995, Ser-1997, and Ser-2008. Lys-2025 is covalently cross-linked (Glycyl lysine isopeptide (Lys-Gly) (interchain with G-Cter in SUMO2)). Disordered stretches follow at residues 2047–2118 (SSDT…YDEE) and 2179–2221 (NRRS…SSSA). A compositionally biased stretch (acidic residues) spans 2063 to 2072 (EDDDDSDSEL). Ser-2068 and Ser-2070 each carry phosphoserine. The span at 2075-2094 (SKLSPSSSSSSSSSSSSSSS) shows a compositional bias: low complexity. The segment covering 2102–2116 (EEKLTADRSRPKLYD) has biased composition (basic and acidic residues). A phosphoserine mark is found at Ser-2182, Ser-2200, and Ser-2202. Thr-2204 is modified (phosphothreonine). At Ser-2211 the chain carries Phosphoserine. Position 2215 is a phosphothreonine (Thr-2215). Ser-2223 is subject to Phosphoserine. A Glycyl lysine isopeptide (Lys-Gly) (interchain with G-Cter in SUMO2) cross-link involves residue Lys-2256. Positions 2484-2581 (PHVDSSTMLH…NSDSSDDADD (98 aa)) are disordered. Over residues 2492–2510 (LHHHHHHPHPHHHHHHHPG) the composition is skewed to basic residues. Over residues 2513–2528 (TTGYPSSPATTTSGTA) the composition is skewed to low complexity. Position 2519 is a phosphoserine (Ser-2519). A compositionally biased stretch (acidic residues) spans 2537–2550 (EDDDEEEDEDDDDL). Residues 2565–2574 (DDPMMPANSD) are compositionally biased toward low complexity.

This sequence belongs to the SNF2/RAD54 helicase family. CHD8 subfamily. As to quaternary structure, interacts with p53/TP53, histone H1 and CTCF. Component of some MLL1/MLL complex, at least composed of the core components KMT2A/MLL1, ASH2L, HCFC1/HCF1, WDR5 and RBBP5, as well as the facultative components BACC1, CHD8, E2F6, HSP70, INO80C, KANSL1, LAS1L, MAX, MCRS1, MGA, KAT8/MOF, PELP1, PHF20, PRP31, RING2, RUVB1/TIP49A, RUVB2/TIP49B, SENP3, TAF1, TAF4, TAF6, TAF7, TAF9 and TEX10. Interacts with CHD7. Interacts with FAM124B. Interacts with CTNNB1. Interacts with PIAS3. Interacts with TLK2. Interacts with HNRNPL in an RNA-dependent manner. Post-translationally, sumoylated.

The protein localises to the nucleus. It carries out the reaction ATP + H2O = ADP + phosphate + H(+). Its function is as follows. ATP-dependent chromatin-remodeling factor, it slides nucleosomes along DNA; nucleosome sliding requires ATP. Acts as a transcription repressor by remodeling chromatin structure and recruiting histone H1 to target genes. Suppresses p53/TP53-mediated apoptosis by recruiting histone H1 and preventing p53/TP53 transactivation activity. Acts as a negative regulator of Wnt signaling pathway by regulating beta-catenin (CTNNB1) activity. Negatively regulates CTNNB1-targeted gene expression by being recruited specifically to the promoter regions of several CTNNB1 responsive genes. Involved in both enhancer blocking and epigenetic remodeling at chromatin boundary via its interaction with CTCF. Acts as a suppressor of STAT3 activity by suppressing the LIF-induced STAT3 transcriptional activity. Also acts as a transcription activator via its interaction with ZNF143 by participating in efficient U6 RNA polymerase III transcription. Regulates alternative splicing of a core group of genes involved in neuronal differentiation, cell cycle and DNA repair. Enables H3K36me3-coupled transcription elongation and co-transcriptional RNA processing likely via interaction with HNRNPL. This Rattus norvegicus (Rat) protein is Chromodomain-helicase-DNA-binding protein 8.